The chain runs to 131 residues: Neurophysin 2 (131 aa).

Cystine bridges form between Cys10-Cys55, Cys13-Cys27, Cys21-Cys45, Cys28-Cys35, Cys62-Cys74, Cys68-Cys86, and Cys75-Cys80.

The protein belongs to the vasopressin/oxytocin family.

Its subcellular location is the secreted. Functionally, neurophysin 2 specifically binds vasopressin. The protein is Neurophysin 2 of Anser anser anser (Western greylag goose).